The chain runs to 515 residues: ATP synthase subunit alpha (515 aa).

171–178 (GDRQTGKT) serves as a coordination point for ATP.

Belongs to the ATPase alpha/beta chains family. As to quaternary structure, F-type ATPases have 2 components, CF(1) - the catalytic core - and CF(0) - the membrane proton channel. CF(1) has five subunits: alpha(3), beta(3), gamma(1), delta(1), epsilon(1). CF(0) has three main subunits: a(1), b(2) and c(9-12). The alpha and beta chains form an alternating ring which encloses part of the gamma chain. CF(1) is attached to CF(0) by a central stalk formed by the gamma and epsilon chains, while a peripheral stalk is formed by the delta and b chains.

It localises to the cell inner membrane. The enzyme catalyses ATP + H2O + 4 H(+)(in) = ADP + phosphate + 5 H(+)(out). Produces ATP from ADP in the presence of a proton gradient across the membrane. The alpha chain is a regulatory subunit. In Xylella fastidiosa (strain M12), this protein is ATP synthase subunit alpha.